The following is a 377-amino-acid chain: Glutamate 5-kinase (377 aa).

An ATP-binding site is contributed by Lys-21. Positions 61, 149, and 161 each coordinate substrate. Residues 181–182 (SD) and 223–229 (SGGMTSK) contribute to the ATP site. The PUA domain occupies 286–363 (RGSVQVDAGA…REHEELLGYA (78 aa)).

This sequence belongs to the glutamate 5-kinase family.

It is found in the cytoplasm. It catalyses the reaction L-glutamate + ATP = L-glutamyl 5-phosphate + ADP. Its pathway is amino-acid biosynthesis; L-proline biosynthesis; L-glutamate 5-semialdehyde from L-glutamate: step 1/2. Its function is as follows. Catalyzes the transfer of a phosphate group to glutamate to form L-glutamate 5-phosphate. The polypeptide is Glutamate 5-kinase (Novosphingobium aromaticivorans (strain ATCC 700278 / DSM 12444 / CCUG 56034 / CIP 105152 / NBRC 16084 / F199)).